Reading from the N-terminus, the 191-residue chain is uncharacterized protein (191 aa).

Positions 52 to 112 (NKQENQTESS…TNKDTNIETN (61 aa)) are disordered. Residues 57 to 70 (QTESSDLNNTDSLV) are compositionally biased toward polar residues. Residues 71–94 (DSNSDNQTNTTDTSTNNVENLNEN) show a composition bias toward low complexity. A coiled-coil region spans residues 138–172 (QDKISDTERIRFLEEKVSKLERKIRTLSLQMTKIS).

This is an uncharacterized protein from Acanthamoeba polyphaga mimivirus (APMV).